Here is a 247-residue protein sequence, read N- to C-terminus: Carboxy-S-adenosyl-L-methionine synthase (247 aa).

S-adenosyl-L-methionine-binding positions include Y39, 64-66 (GCS), 117-118 (DI), N132, and R199.

This sequence belongs to the class I-like SAM-binding methyltransferase superfamily. Cx-SAM synthase family. Homodimer.

It carries out the reaction prephenate + S-adenosyl-L-methionine = carboxy-S-adenosyl-L-methionine + 3-phenylpyruvate + H2O. Catalyzes the conversion of S-adenosyl-L-methionine (SAM) to carboxy-S-adenosyl-L-methionine (Cx-SAM). In Aeromonas salmonicida (strain A449), this protein is Carboxy-S-adenosyl-L-methionine synthase.